Consider the following 403-residue polypeptide: MKLMKLPSEFQKALPILKKIKEAGFEAYFVGGGVRDILLDRPIHDVDIATSSYPEETKAIFSRTVDIGIEHGTVLVLENDAEYEITTFRTEDIYVDYRRPSNVSFVRSLEEDLKRRDFTVNALALDETGQVIDKFHGLQDLKRKELRAVGKAEERFQEDALRIMRGFRFAASLDFKIEDETFEAMKTHAHLLQKISVERSFIELDKLFMAPNWKLGLTYFIEAQAYNYLPGLENRQSELTGMMDHFDAHFVFDSSEQAWANMIIALSLDKEKAFLKSWKTSNDFQKQVTQIVTLYRKRESALLSKMDLYMYGKEAAILSENLRKAKGLPTDFNHMMRTYDDLTIYDKHEIVVNGRYLMEKLNMKAGPQLGHLLKKVEKAIVEGTLANKVGDIEAFIMKELENE.

Residues Gly-32 and Arg-35 each contribute to the ATP site. CTP contacts are provided by Gly-32 and Arg-35. Residues Asp-45 and Asp-47 each contribute to the Mg(2+) site. Arg-116, Asp-159, Arg-162, Arg-165, and Arg-168 together coordinate ATP. The CTP site is built by Arg-116, Asp-159, Arg-162, Arg-165, and Arg-168.

Belongs to the tRNA nucleotidyltransferase/poly(A) polymerase family. Bacterial CCA-adding enzyme type 3 subfamily. As to quaternary structure, homodimer. The cofactor is Mg(2+).

The enzyme catalyses a tRNA precursor + 2 CTP + ATP = a tRNA with a 3' CCA end + 3 diphosphate. It catalyses the reaction a tRNA with a 3' CCA end + 2 CTP + ATP = a tRNA with a 3' CCACCA end + 3 diphosphate. Its function is as follows. Catalyzes the addition and repair of the essential 3'-terminal CCA sequence in tRNAs without using a nucleic acid template. Adds these three nucleotides in the order of C, C, and A to the tRNA nucleotide-73, using CTP and ATP as substrates and producing inorganic pyrophosphate. tRNA 3'-terminal CCA addition is required both for tRNA processing and repair. Also involved in tRNA surveillance by mediating tandem CCA addition to generate a CCACCA at the 3' terminus of unstable tRNAs. While stable tRNAs receive only 3'-terminal CCA, unstable tRNAs are marked with CCACCA and rapidly degraded. This chain is CCA-adding enzyme, found in Streptococcus uberis (strain ATCC BAA-854 / 0140J).